Consider the following 590-residue polypeptide: Beta-(1--&gt;2)glucan export ATP-binding/permease protein NdvA (590 aa).

The ABC transmembrane type-1 domain occupies 21 to 301; the sequence is VALICGANVA…MSAFANQISE (281 aa). The next 6 membrane-spanning stretches (helical) occupy residues 22 to 42, 55 to 75, 136 to 156, 158 to 178, 248 to 268, and 275 to 295; these read ALIC…PIMF, VFST…AFVL, QHLS…SMDV, MSMV…LVMK, LSST…VTHG, and VIAF…MSAF. An ABC transporter domain is found at 335-569; sequence VRFEDVGFEF…NGRFASLLRA (235 aa). 368 to 375 provides a ligand contact to ATP; it reads GPTGAGKT.

The protein belongs to the ABC transporter superfamily. Beta-(1--&gt;2)glucan exporter (TC 3.A.1.108.1) family. In terms of assembly, homodimer.

It localises to the cell inner membrane. The enzyme catalyses [(1-&gt;2)-beta-D-glucosyl](n)(in) + ATP + H2O = [(1-&gt;2)-beta-D-glucosyl](n)(out) + ADP + phosphate + H(+). In terms of biological role, involved in beta-(1--&gt;2)glucan export. Transmembrane domains (TMD) form a pore in the inner membrane and the ATP-binding domain (NBD) is responsible for energy generation. This chain is Beta-(1--&gt;2)glucan export ATP-binding/permease protein NdvA, found in Mesorhizobium japonicum (strain LMG 29417 / CECT 9101 / MAFF 303099) (Mesorhizobium loti (strain MAFF 303099)).